The primary structure comprises 212 residues: Lipid A acyltransferase PagP (212 aa).

The signal sequence occupies residues 1–26 (MSSTYFHSSLLAATLFSVTLTAPAFA). Residues 29–44 (NTQNTPQTITTKKPQP) show a composition bias toward low complexity. The tract at residues 29–50 (NTQNTPQTITTKKPQPAENTFS) is disordered. Residues His84, Asp127, and Ser128 contribute to the active site.

Belongs to the lipid A palmitoyltransferase family. Homodimer.

Its subcellular location is the cell outer membrane. The enzyme catalyses a lipid A + a 1,2-diacyl-sn-glycero-3-phosphocholine = a hepta-acyl lipid A + a 2-acyl-sn-glycero-3-phosphocholine. The catalysed reaction is a lipid IVA + a 1,2-diacyl-sn-glycero-3-phosphocholine = a lipid IVB + a 2-acyl-sn-glycero-3-phosphocholine. It catalyses the reaction a lipid IIA + a 1,2-diacyl-sn-glycero-3-phosphocholine = a lipid IIB + a 2-acyl-sn-glycero-3-phosphocholine. Functionally, transfers a fatty acid residue from the sn-1 position of a phospholipid to the N-linked hydroxyfatty acid chain on the proximal unit of lipid A or its precursors. The sequence is that of Lipid A acyltransferase PagP from Proteus mirabilis (strain HI4320).